The following is a 412-amino-acid chain: MSRRKQTNPNKVHWDQVFAGLEEQARQAMMKTDFPGDLGSQRQAIQQLRDQDSSSSDSEGDEEETTQDEVSSHTSEEDGGVVKVEKELENAEQPVGGKKVVEHEVTENLHSDPLLGLCQCPLCQLDCGSREQLIAHVYQHTAAVVSAKSYMCPVCGRALSSPGSLGRHLLIHSEDQRSNCAVCGARFTSHATFNSEKLPEVLNVESLPPAHSEGPSSAEGKDIAFTPPVYPAGILLVCNNCAAYRKLLEAQTPSVRKWALRRQNEPLEVRLQRLERERTAKKSRRDNETPEEREVRRMRDREAKRLQRMQETDEQRARRLQRDREAMRLKRANETPEKRQARLIREREAKRLKRRLEKMDMMLRAQFGQDPSAMAALAAEMNFFQLPVSGVELDSQLLGKMAFEEQNSSSLH.

Residues 26–83 (RQAMMKTDFPGDLGSQRQAIQQLRDQDSSSSDSEGDEEETTQDEVSSHTSEEDGGVVK) are disordered. Residues 58-67 (SEGDEEETTQ) are compositionally biased toward acidic residues. 2 C2H2-type zinc fingers span residues 116–140 (GLCQ…VYQH) and 150–172 (YMCP…LLIH). Positions 257 to 366 (KWALRRQNEP…EKMDMMLRAQ (110 aa)) form a coiled coil. The interval 278 to 319 (RTAKKSRRDNETPEEREVRRMRDREAKRLQRMQETDEQRARR) is disordered.

Belongs to the krueppel C2H2-type zinc-finger protein family.

Its subcellular location is the nucleus. Its function is as follows. May be involved in transcriptional regulation. The sequence is that of Zinc finger protein 821 (ZNF821) from Bos taurus (Bovine).